Consider the following 156-residue polypeptide: MGRFIFVSFGLLVVFLSLSGTGADCPSDWSSFKQYCYQIVKELKTWEDAEKFCSEQANDGHLVSIESYREAVFVAELLSENVKTTKYNVWIGLSVQNKGQQCSSEWSDGSSVSYENLVKPNPKKCFVLKKESEFRTWSNVYCEQKHIFMCKFLGSR.

A signal peptide spans 1–23 (MGRFIFVSFGLLVVFLSLSGTGA). Residues 24-151 (DCPSDWSSFK…CEQKHIFMCK (128 aa)) enclose the C-type lectin domain. Disulfide bonds link C25–C36, C53–C150, and C125–C142.

Belongs to the snaclec family. As to quaternary structure, heterodimer of subunits alpha and beta; disulfide-linked. As to expression, expressed by the venom gland.

The protein resides in the secreted. Its function is as follows. Weakly agglutinates platelets at high doses by binding to GPIbalpha (GP1BA). In Trimeresurus albolabris (White-lipped pit viper), this protein is Snaclec alboaggregin-B subunit alpha.